Here is a 139-residue protein sequence, read N- to C-terminus: Putative lipoprotein MIP_01412 (139 aa).

Residues 1-19 (MRNRTVAAGAVLTAALLGA) form the signal peptide. Residue Cys-20 is the site of N-palmitoyl cysteine attachment. Residue Cys-20 is the site of S-diacylglycerol cysteine attachment.

It belongs to the mycobacterial 19 kDa antigen family.

Its subcellular location is the cell membrane. In Mycobacterium indicus pranii (strain DSM 45239 / MTCC 9506), this protein is Putative lipoprotein MIP_01412.